The following is a 439-amino-acid chain: ATP-dependent protease ATPase subunit HslU (439 aa).

Residues Ile-17, 59–64, Asp-251, Glu-317, and Arg-389 each bind ATP; that span reads GVGKTE.

It belongs to the ClpX chaperone family. HslU subfamily. A double ring-shaped homohexamer of HslV is capped on each side by a ring-shaped HslU homohexamer. The assembly of the HslU/HslV complex is dependent on binding of ATP.

Its subcellular location is the cytoplasm. Functionally, ATPase subunit of a proteasome-like degradation complex; this subunit has chaperone activity. The binding of ATP and its subsequent hydrolysis by HslU are essential for unfolding of protein substrates subsequently hydrolyzed by HslV. HslU recognizes the N-terminal part of its protein substrates and unfolds these before they are guided to HslV for hydrolysis. The polypeptide is ATP-dependent protease ATPase subunit HslU (Campylobacter jejuni subsp. doylei (strain ATCC BAA-1458 / RM4099 / 269.97)).